The chain runs to 383 residues: Succinate--CoA ligase [ADP-forming] subunit beta (383 aa).

Positions 9–241 (KEVLHKFNVS…YDEEVKEEIE (233 aa)) constitute an ATP-grasp domain. Residues Lys-46, 53–55 (GRG), Glu-99, Ser-102, and Glu-107 contribute to the ATP site. Mg(2+) contacts are provided by Asn-196 and Asp-210. Residues Asn-261 and 318–320 (GIM) each bind substrate.

The protein belongs to the succinate/malate CoA ligase beta subunit family. As to quaternary structure, heterotetramer of two alpha and two beta subunits. The cofactor is Mg(2+).

The catalysed reaction is succinate + ATP + CoA = succinyl-CoA + ADP + phosphate. It carries out the reaction GTP + succinate + CoA = succinyl-CoA + GDP + phosphate. It functions in the pathway carbohydrate metabolism; tricarboxylic acid cycle; succinate from succinyl-CoA (ligase route): step 1/1. Functionally, succinyl-CoA synthetase functions in the citric acid cycle (TCA), coupling the hydrolysis of succinyl-CoA to the synthesis of either ATP or GTP and thus represents the only step of substrate-level phosphorylation in the TCA. The beta subunit provides nucleotide specificity of the enzyme and binds the substrate succinate, while the binding sites for coenzyme A and phosphate are found in the alpha subunit. This Wolbachia sp. subsp. Drosophila simulans (strain wRi) protein is Succinate--CoA ligase [ADP-forming] subunit beta.